A 237-amino-acid chain; its full sequence is Uridylate kinase (237 aa).

An ATP-binding site is contributed by 10–13 (KLSG). Gly51 contributes to the UMP binding site. ATP-binding residues include Gly52 and Arg56. Residues Asp71 and 132–139 (MGMPFFST) each bind UMP. ATP contacts are provided by Asn160, Tyr166, and Asp169.

It belongs to the UMP kinase family. As to quaternary structure, homohexamer.

The protein resides in the cytoplasm. The catalysed reaction is UMP + ATP = UDP + ADP. It functions in the pathway pyrimidine metabolism; CTP biosynthesis via de novo pathway; UDP from UMP (UMPK route): step 1/1. Inhibited by UTP. Catalyzes the reversible phosphorylation of UMP to UDP. This is Uridylate kinase from Nocardioides sp. (strain ATCC BAA-499 / JS614).